Here is a 487-residue protein sequence, read N- to C-terminus: GTPase Der (487 aa).

2 consecutive EngA-type G domains span residues 3-166 and 193-366; these read PVIA…PRDA and IKIA…KSAV. GTP contacts are provided by residues 9–16, 56–60, 118–121, 199–206, 246–250, and 311–314; these read GRPNVGKS, DTGGI, NKID, DTAGV, and NKWD. A KH-like domain is found at 367–451; that stretch reads TRWPTSRLTQ…PIRIEYKGGE (85 aa). The segment covering 448–461 has biased composition (basic and acidic residues); it reads KGGENPYEGKKNTL. Residues 448–487 form a disordered region; it reads KGGENPYEGKKNTLTDRQVNKKRRLMSHHKKAEKKRRDKR. Residues 467–487 are compositionally biased toward basic residues; sequence NKKRRLMSHHKKAEKKRRDKR.

The protein belongs to the TRAFAC class TrmE-Era-EngA-EngB-Septin-like GTPase superfamily. EngA (Der) GTPase family. As to quaternary structure, associates with the 50S ribosomal subunit.

Its function is as follows. GTPase that plays an essential role in the late steps of ribosome biogenesis. The sequence is that of GTPase Der from Pseudomonas putida (strain W619).